We begin with the raw amino-acid sequence, 126 residues long: Large ribosomal subunit protein bL12 (126 aa).

It belongs to the bacterial ribosomal protein bL12 family. In terms of assembly, homodimer. Part of the ribosomal stalk of the 50S ribosomal subunit. Forms a multimeric L10(L12)X complex, where L10 forms an elongated spine to which 2 to 4 L12 dimers bind in a sequential fashion. Binds GTP-bound translation factors.

Forms part of the ribosomal stalk which helps the ribosome interact with GTP-bound translation factors. Is thus essential for accurate translation. The polypeptide is Large ribosomal subunit protein bL12 (Acidovorax ebreus (strain TPSY) (Diaphorobacter sp. (strain TPSY))).